Reading from the N-terminus, the 144-residue chain is Large ribosomal subunit protein uL11 (144 aa).

This sequence belongs to the universal ribosomal protein uL11 family. Part of the ribosomal stalk of the 50S ribosomal subunit. Interacts with L10 and the large rRNA to form the base of the stalk. L10 forms an elongated spine to which L12 dimers bind in a sequential fashion forming a multimeric L10(L12)X complex. In terms of processing, one or more lysine residues are methylated.

In terms of biological role, forms part of the ribosomal stalk which helps the ribosome interact with GTP-bound translation factors. In Polaromonas naphthalenivorans (strain CJ2), this protein is Large ribosomal subunit protein uL11.